Here is a 98-residue protein sequence, read N- to C-terminus: NADH-ubiquinone oxidoreductase chain 4L (98 aa).

3 helical membrane-spanning segments follow: residues 1-21 (MSLV…GLLM), 25-45 (HLMS…VMAT), and 59-81 (MPII…LVMV).

It belongs to the complex I subunit 4L family. In terms of assembly, core subunit of respiratory chain NADH dehydrogenase (Complex I) which is composed of 45 different subunits.

Its subcellular location is the mitochondrion inner membrane. It carries out the reaction a ubiquinone + NADH + 5 H(+)(in) = a ubiquinol + NAD(+) + 4 H(+)(out). Core subunit of the mitochondrial membrane respiratory chain NADH dehydrogenase (Complex I) which catalyzes electron transfer from NADH through the respiratory chain, using ubiquinone as an electron acceptor. Part of the enzyme membrane arm which is embedded in the lipid bilayer and involved in proton translocation. The polypeptide is NADH-ubiquinone oxidoreductase chain 4L (MT-ND4L) (Equus caballus (Horse)).